The primary structure comprises 192 residues: Secreted and transmembrane protein 1A (192 aa).

A signal peptide spans 1–27; it reads MMTCPSVPAIPTLWLFSILLLVVSLNA. Residues 28-165 are Extracellular-facing; that stretch reads QNKSWDNPIC…SSPIEGKPGT (138 aa). N29, N55, N84, and N127 each carry an N-linked (GlcNAc...) asparagine glycan. A helical membrane pass occupies residues 166 to 186; sequence LVGVITVIFILGVAGFITFIY. The Cytoplasmic portion of the chain corresponds to 187–192; it reads YRHRRS.

It belongs to the SECTM family.

It localises to the cell membrane. The protein resides in the secreted. This is Secreted and transmembrane protein 1A from Mus musculus (Mouse).